The sequence spans 114 residues: NADH-ubiquinone oxidoreductase chain 3 (114 aa).

3 helical membrane-spanning segments follow: residues 3–23 (LITL…INTY), 52–72 (IQFF…VLLL), and 86–106 (TILL…YEWL).

Belongs to the complex I subunit 3 family.

The protein localises to the mitochondrion membrane. The enzyme catalyses a ubiquinone + NADH + 5 H(+)(in) = a ubiquinol + NAD(+) + 4 H(+)(out). Its function is as follows. Core subunit of the mitochondrial membrane respiratory chain NADH dehydrogenase (Complex I) that is believed to belong to the minimal assembly required for catalysis. Complex I functions in the transfer of electrons from NADH to the respiratory chain. The immediate electron acceptor for the enzyme is believed to be ubiquinone. The chain is NADH-ubiquinone oxidoreductase chain 3 (MT-ND3) from Lycodon semicarinatus (Ryukyu odd-tooth snake).